The chain runs to 159 residues: Small ribosomal subunit protein uS4 (159 aa).

Positions 106-158 (RRLQTIVYRMGLAKSIHHARQLIVHGHVAVAGRRVTSPGFLVPRELEDKISLI) constitute an S4 RNA-binding domain.

The protein belongs to the universal ribosomal protein uS4 family. In terms of assembly, part of the 30S ribosomal subunit. Contacts protein S5. The interaction surface between S4 and S5 is involved in control of translational fidelity.

One of the primary rRNA binding proteins, it binds directly to 16S rRNA where it nucleates assembly of the body of the 30S subunit. Functionally, with S5 and S12 plays an important role in translational accuracy. This chain is Small ribosomal subunit protein uS4, found in Pyrobaculum aerophilum (strain ATCC 51768 / DSM 7523 / JCM 9630 / CIP 104966 / NBRC 100827 / IM2).